The following is a 254-amino-acid chain: Ribosomal RNA small subunit methyltransferase G (254 aa).

Residues Gly92, 143-144 (AE), and Arg156 contribute to the S-adenosyl-L-methionine site.

The protein belongs to the methyltransferase superfamily. RNA methyltransferase RsmG family.

It localises to the cytoplasm. Specifically methylates the N7 position of a guanine in 16S rRNA. The protein is Ribosomal RNA small subunit methyltransferase G of Leptospira interrogans serogroup Icterohaemorrhagiae serovar copenhageni (strain Fiocruz L1-130).